A 169-amino-acid chain; its full sequence is Endoribonuclease YbeY (169 aa).

The Zn(2+) site is built by H128, H132, and H138.

The protein belongs to the endoribonuclease YbeY family. Zn(2+) is required as a cofactor.

It is found in the cytoplasm. Its function is as follows. Single strand-specific metallo-endoribonuclease involved in late-stage 70S ribosome quality control and in maturation of the 3' terminus of the 16S rRNA. The protein is Endoribonuclease YbeY of Cyanothece sp. (strain PCC 7425 / ATCC 29141).